The primary structure comprises 886 residues: Envelope glycoprotein GP350 (886 aa).

Residues 1 to 839 (MEAALLVCQY…TSQPRFSNLS (839 aa)) lie on the Virion surface side of the membrane. N-linked (GlcNAc...) asparagine; by host glycosylation is found at Asn47, Asn87, Asn114, Asn166, Asn169, Asn195, Asn229, Asn277, Asn318, Asn328, Asn345, Asn356, Asn378, Asn386, Asn411, Asn435, Asn443, Asn457, Asn497, Asn519, Asn533, Asn554, Asn568, Asn589, Asn603, Asn606, Asn624, and Asn635. The disordered stretch occupies residues 423–810 (KAPESTTTSP…PSTSSKLRPR (388 aa)). The span at 428-437 (TTTSPTLNTT) shows a compositional bias: low complexity. The segment covering 442–488 (PNTTTGLPSSTHVPTNLTAPASTGPTVSTADVTSPTPAGTTSGASPV) has biased composition (polar residues). Low complexity predominate over residues 507–595 (TSPTSAVTTP…PTPNATSPTV (89 aa)). Residues 596–637 (GETSPQANTTNHTLGGTSSTPVVTSPPKNATSAVTTGQHNIT) are compositionally biased toward polar residues. Positions 638–660 (SSSTSSMSLRPSSISETLSPSTS) are enriched in low complexity. Asn662 and Asn680 each carry an N-linked (GlcNAc...) asparagine; by host glycan. The segment covering 684 to 699 (VTPASTSTHHVSTSSP) has biased composition (low complexity). The segment covering 704–720 (GTTSQASGPGNSSTSTK) has biased composition (polar residues). Residues Asn714, Asn725, Asn734, and Asn759 are each glycosylated (N-linked (GlcNAc...) asparagine; by host). The span at 733-760 (KNATSPQAPSGQKTAVPTVTSTGGKANS) shows a compositional bias: polar residues. Low complexity predominate over residues 761-771 (TTGGKHTTGHG). Polar residues predominate over residues 773–806 (RTSTEPTTDYGGDSTTPRTRYNATTYLPPSTSSK). 2 N-linked (GlcNAc...) asparagine; by host glycosylation sites follow: Asn794 and Asn837. A helical transmembrane segment spans residues 840-860 (MLVLQWASLAVLTLLLLLVMA). The Intravirion portion of the chain corresponds to 861–886 (DCAFRRNLSTSHTYTTPPYDDAETYV).

It belongs to the Epstein-Barr GP350 family. In terms of assembly, interacts with host CR2. In terms of processing, extensively glycosylated.

It localises to the virion membrane. Its subcellular location is the host membrane. Functionally, initiates virion attachment to host B-lymphocyte cell, leading to virus entry. Acts by binding to host CR2 at the surface of B-lymphocytes, facilitating the binding of viral glycoprotein gp42 to HLA class II molecules. Attachment triggers virion-host membrane fusion and invasion of the host cell. This is Envelope glycoprotein GP350 from Homo sapiens (Human).